A 398-amino-acid polypeptide reads, in one-letter code: Cysteine desulfurase (398 aa).

Pyridoxal 5'-phosphate contacts are provided by residues 74–75, Asn155, Gln182, and 202–204; these read GT and CGH. Lys205 is subject to N6-(pyridoxal phosphate)lysine. A compositionally biased stretch (basic and acidic residues) spans 230–244; the sequence is GHQERSRRAGNGERA. The tract at residues 230–253 is disordered; that stretch reads GHQERSRRAGNGERAGHRRAGGGA. The active-site Cysteine persulfide intermediate is Cys327. Position 327 (Cys327) interacts with [2Fe-2S] cluster.

It belongs to the class-V pyridoxal-phosphate-dependent aminotransferase family. NifS/IscS subfamily. As to quaternary structure, homodimer. Requires pyridoxal 5'-phosphate as cofactor.

The enzyme catalyses (sulfur carrier)-H + L-cysteine = (sulfur carrier)-SH + L-alanine. Functionally, catalyzes the removal of elemental sulfur atoms from cysteine to produce alanine. Seems to participate in the biosynthesis of the nitrogenase metalloclusters by providing the inorganic sulfur required for the Fe-S core formation. The sequence is that of Cysteine desulfurase from Azospirillum brasilense.